A 246-amino-acid polypeptide reads, in one-letter code: E3 ubiquitin-protein ligase MARCHF2 (246 aa).

The RING-CH-type zinc-finger motif lies at 56–116 (GTQSDGPICR…ELCHTEFAVE (61 aa)). The Zn(2+) site is built by Cys-64, Cys-67, Cys-80, Cys-82, His-90, Cys-93, Cys-106, and Cys-109. 2 helical membrane-spanning segments follow: residues 138-158 (LFCD…SGWL) and 175-195 (AVGL…WTLV).

The protein localises to the endoplasmic reticulum membrane. Its subcellular location is the lysosome membrane. It is found in the endosome membrane. It carries out the reaction S-ubiquitinyl-[E2 ubiquitin-conjugating enzyme]-L-cysteine + [acceptor protein]-L-lysine = [E2 ubiquitin-conjugating enzyme]-L-cysteine + N(6)-ubiquitinyl-[acceptor protein]-L-lysine.. Its pathway is protein modification; protein ubiquitination. In terms of biological role, E3 ubiquitin-protein ligase which may be involved in endosomal trafficking. E3 ubiquitin ligases accept ubiquitin from an E2 ubiquitin-conjugating enzyme in the form of a thioester and then directly transfer the ubiquitin to targeted substrates. The sequence is that of E3 ubiquitin-protein ligase MARCHF2 (marchf2) from Xenopus tropicalis (Western clawed frog).